The following is a 110-amino-acid chain: Large ribosomal subunit protein uL22 (110 aa).

This sequence belongs to the universal ribosomal protein uL22 family. Part of the 50S ribosomal subunit.

Its function is as follows. This protein binds specifically to 23S rRNA; its binding is stimulated by other ribosomal proteins, e.g. L4, L17, and L20. It is important during the early stages of 50S assembly. It makes multiple contacts with different domains of the 23S rRNA in the assembled 50S subunit and ribosome. Functionally, the globular domain of the protein is located near the polypeptide exit tunnel on the outside of the subunit, while an extended beta-hairpin is found that lines the wall of the exit tunnel in the center of the 70S ribosome. This chain is Large ribosomal subunit protein uL22, found in Paracidovorax citrulli (strain AAC00-1) (Acidovorax citrulli).